The following is a 483-amino-acid chain: Regulatory protein ViaA (483 aa).

This sequence belongs to the ViaA family. Homodimer. Interacts with RavA.

It localises to the cytoplasm. In terms of biological role, component of the RavA-ViaA chaperone complex, which may act on the membrane to optimize the function of some of the respiratory chains. ViaA stimulates the ATPase activity of RavA. This is Regulatory protein ViaA from Escherichia coli O139:H28 (strain E24377A / ETEC).